The chain runs to 945 residues: Xylanolytic transcriptional activator xlnR (945 aa).

Disordered regions lie at residues 1 to 33 (MSTPSIPQFPSPFSPFSSGSQSTGMAPSQTVGL) and 53 to 74 (AAGTGAGDGATSTSLRNSMSHA). The segment covering 14–24 (SPFSSGSQSTG) has biased composition (low complexity). A DNA-binding region (zn(2)-C6 fungal-type) is located at residues 125-151 (CDQCNQLRTKCDGQHPCAHCIEFGLTC). 2 disordered regions span residues 172–251 (AAAA…PSLG) and 559–601 (PPNV…INVT). 2 stretches are compositionally biased toward polar residues: residues 177–188 (HGSNGHSGQANA) and 218–251 (ISSQPSHMQHANNAGISGLHDSQTAPSHSQPSLG). The segment covering 565–581 (ARQDGERDGDGEADRRH) has biased composition (basic and acidic residues).

The protein belongs to the xlnR/xlr1 family.

Its subcellular location is the nucleus. Functionally, transcriptional activator of the xylanolytic system. Involved in the regulation of extracellular cellulolytic and xylanolytic genes and in the regulation of the intracellular activities of D-xylose catabolic genes in the pentose catabolic pathway (PCP) in response to the presence of D-xylose. The polypeptide is Xylanolytic transcriptional activator xlnR (xlnR) (Aspergillus kawachii (White koji mold)).